A 172-amino-acid chain; its full sequence is Shikimate kinase (172 aa).

Residue 14-19 (GAGKST) coordinates ATP. Residue Ser-18 participates in Mg(2+) binding. 3 residues coordinate substrate: Asp-36, Arg-60, and Gly-82. Arg-120 lines the ATP pocket. A substrate-binding site is contributed by Arg-139. ATP is bound at residue Gln-156.

The protein belongs to the shikimate kinase family. In terms of assembly, monomer. It depends on Mg(2+) as a cofactor.

Its subcellular location is the cytoplasm. The catalysed reaction is shikimate + ATP = 3-phosphoshikimate + ADP + H(+). Its pathway is metabolic intermediate biosynthesis; chorismate biosynthesis; chorismate from D-erythrose 4-phosphate and phosphoenolpyruvate: step 5/7. Its function is as follows. Catalyzes the specific phosphorylation of the 3-hydroxyl group of shikimic acid using ATP as a cosubstrate. This Vibrio vulnificus (strain CMCP6) protein is Shikimate kinase.